Reading from the N-terminus, the 308-residue chain is Acetylglutamate kinase (308 aa).

Residues glycine 67–glycine 68, arginine 89, and asparagine 193 contribute to the substrate site.

The protein belongs to the acetylglutamate kinase family. ArgB subfamily.

The protein localises to the cytoplasm. The enzyme catalyses N-acetyl-L-glutamate + ATP = N-acetyl-L-glutamyl 5-phosphate + ADP. It functions in the pathway amino-acid biosynthesis; L-arginine biosynthesis; N(2)-acetyl-L-ornithine from L-glutamate: step 2/4. In terms of biological role, catalyzes the ATP-dependent phosphorylation of N-acetyl-L-glutamate. This is Acetylglutamate kinase from Nitratidesulfovibrio vulgaris (strain DP4) (Desulfovibrio vulgaris).